The primary structure comprises 1011 residues: Phosphoenolpyruvate carboxylase (1011 aa).

Residues His207 and Lys658 contribute to the active site.

Belongs to the PEPCase type 1 family. The cofactor is Mg(2+).

It carries out the reaction oxaloacetate + phosphate = phosphoenolpyruvate + hydrogencarbonate. Its function is as follows. Forms oxaloacetate, a four-carbon dicarboxylic acid source for the tricarboxylic acid cycle. The protein is Phosphoenolpyruvate carboxylase (ppc) of Thermosynechococcus vestitus (strain NIES-2133 / IAM M-273 / BP-1).